A 1081-amino-acid polypeptide reads, in one-letter code: Cellulose synthase A catalytic subunit 1 [UDP-forming] (1081 aa).

Methionine 1 is subject to N-acetylmethionine. The Cytoplasmic portion of the chain corresponds to methionine 1 to arginine 270. Positions 39, 42, 58, 61, 66, 69, 81, and 84 each coordinate Zn(2+). An RING-type; degenerate zinc finger spans residues cysteine 39–lysine 85. The segment at glycine 118 to aspartate 195 is disordered. The span at histidine 127–serine 139 shows a compositional bias: basic and acidic residues. A compositionally biased stretch (polar residues) spans proline 158–glycine 168. The helical transmembrane segment at leucine 271–tyrosine 291 threads the bilayer. The Extracellular portion of the chain corresponds to arginine 292–asparagine 299. A helical transmembrane segment spans residues alanine 300–leucine 320. At aspartate 321 to threonine 856 the chain is on the cytoplasmic side. UDP-alpha-D-glucose is bound by residues serine 359, lysine 365, glutamate 366, and aspartate 395. Aspartate 395 is an active-site residue. Residues valine 449–isoleucine 476 adopt a coiled-coil conformation. Position 536 (lysine 536) interacts with UDP-alpha-D-glucose. Mn(2+) contacts are provided by lysine 537 and aspartate 561. Aspartate 780 is a catalytic residue. The chain crosses the membrane as a helical span at residues isoleucine 857–leucine 877. At isoleucine 878–asparagine 889 the chain is on the extracellular side. The helical transmembrane segment at tyrosine 890–leucine 910 threads the bilayer. Topologically, residues arginine 911–glutamine 925 are cytoplasmic. Residues phenylalanine 926–valine 946 form a helical membrane-spanning segment. Residues leucine 947–threonine 976 lie on the Extracellular side of the membrane. Residue asparagine 953 is glycosylated (N-linked (GlcNAc...) asparagine). A helical transmembrane segment spans residues alanine 977–valine 997. The Cytoplasmic portion of the chain corresponds to serine 998–tryptophan 1008. The chain crosses the membrane as a helical span at residues glycine 1009–leucine 1029. The Extracellular portion of the chain corresponds to lysine 1030–arginine 1038. A helical membrane pass occupies residues threonine 1039–valine 1059. Residues arginine 1060–phenylalanine 1081 are Cytoplasmic-facing.

Belongs to the glycosyltransferase 2 family. Plant cellulose synthase subfamily. In terms of assembly, interacts with CESA3 and CESA6. Assembly with CESA3 and CESA6 is required for functional complex in primary cell wall cellulose synthesis. Interacts with STL1 and STL2, but not with GOT1. Binds to CSI1. Interacts with PAT24/TIP1. Requires Zn(2+) as cofactor. The cofactor is Mn(2+). In terms of processing, S-acylated. In terms of tissue distribution, expressed in germinating seeds, seedlings, roots, stems, shoots leaves and flowers, but not in mature flowers.

It localises to the cell membrane. The enzyme catalyses [(1-&gt;4)-beta-D-glucosyl](n) + UDP-alpha-D-glucose = [(1-&gt;4)-beta-D-glucosyl](n+1) + UDP + H(+). It functions in the pathway glycan metabolism; plant cellulose biosynthesis. In terms of biological role, catalytic subunit of cellulose synthase terminal complexes ('rosettes'), required for beta-1,4-glucan microfibril crystallization, a major mechanism of the cell wall formation. Involved in the primary cell wall formation. Required during embryogenesis for cell elongation, orientation of cell expansion and complex cell wall formations, such as interdigitated pattern of epidermal pavement cells, stomatal guard cells and trichomes. Plays a role in lateral roots formation, but seems not necessary for the development of tip-growing cells such as root hairs. The presence of each protein CESA1 and CESA6 is critical for cell expansion after germination. This is Cellulose synthase A catalytic subunit 1 [UDP-forming] from Arabidopsis thaliana (Mouse-ear cress).